The chain runs to 185 residues: Small ribosomal subunit protein uS4c (185 aa).

Positions 72–134 (MRLDNVIFRL…PTSCNALKGE (63 aa)) constitute an S4 RNA-binding domain. Residues 132-154 (KGESPGGGETPDHLTASLSEGSR) are disordered.

This sequence belongs to the universal ribosomal protein uS4 family. Part of the 30S ribosomal subunit. Contacts protein S5. The interaction surface between S4 and S5 is involved in control of translational fidelity.

The protein localises to the plastid. It localises to the chloroplast. Functionally, one of the primary rRNA binding proteins, it binds directly to 16S rRNA where it nucleates assembly of the body of the 30S subunit. With S5 and S12 plays an important role in translational accuracy. The chain is Small ribosomal subunit protein uS4c (rps4) from Woodwardia radicans (Rooting chainfern).